A 105-amino-acid chain; its full sequence is uncharacterized protein (105 aa).

This is an uncharacterized protein from Bacillus subtilis (strain 168).